The sequence spans 358 residues: Dynein axonemal assembly factor 10 (358 aa).

6 WD repeats span residues 64–106 (EKPK…TPVY), 116–155 (NCID…TPVA), 163–206 (EAKR…VRWE), 208–250 (NIKN…PTKG), 258–298 (AHKS…QRSR), and 320–358 (LSTQ…LNRL).

As to quaternary structure, interacts with PIH1D1; the interaction associates DNAAF10 with the R2TP complex. Interacts with several dynein axonemal assembly factors.

It localises to the dynein axonemal particle. Functionally, key assembly factor specifically required for the stability of axonemal dynein heavy chains in cytoplasm. This Xenopus laevis (African clawed frog) protein is Dynein axonemal assembly factor 10 (dnaaf10).